We begin with the raw amino-acid sequence, 319 residues long: Myoblast determination protein 1 (319 aa).

Met-1 participates in a covalent cross-link: Peptide (Met-Gly) (interchain with G-Cter in ubiquitin). N6-methyllysine; by EHMT2 is present on Lys-104. The bHLH domain maps to 109 to 160; sequence DRRKAATMRERRRLSKVNEAFETLKRCTSSNPNQRLPKVEILRNAIRYIEGL. 2 disordered regions span residues 174 to 221 and 266 to 319; these read AAAA…SGAR and APAL…YQVL. 2 stretches are compositionally biased toward polar residues: residues 197–207 and 308–319; these read SDASSPRSNCS and ASANPNPIYQVL.

Efficient DNA binding requires dimerization with another bHLH protein. Seems to form active heterodimers with ITF-2. Interacts with SUV39H1. Interacts with DDX5. Interacts with CHD2. Interacts with TSC22D3. Interacts with SETD3. Interacts with P-TEFB complex; promotes the transcriptional activity of MYOD1 through its CDK9-mediated phosphorylation. Interacts with CSRP3. Interacts with NUPR1. Post-translationally, phosphorylated by CDK9. This phosphorylation promotes its function in muscle differentiation. Acetylated by a complex containing EP300 and PCAF. The acetylation is essential to activate target genes. Conversely, its deacetylation by SIRT1 inhibits its function. In terms of processing, ubiquitinated on the N-terminus; which is required for proteasomal degradation. Post-translationally, methylation at Lys-104 by EHMT2/G9a inhibits myogenic activity.

Its subcellular location is the nucleus. In terms of biological role, acts as a transcriptional activator that promotes transcription of muscle-specific target genes and plays a role in muscle differentiation. Together with MYF5 and MYOG, co-occupies muscle-specific gene promoter core region during myogenesis. Induces fibroblasts to differentiate into myoblasts. Interacts with and is inhibited by the twist protein. This interaction probably involves the basic domains of both proteins. The polypeptide is Myoblast determination protein 1 (MYOD1) (Sus scrofa (Pig)).